A 152-amino-acid polypeptide reads, in one-letter code: Large-conductance mechanosensitive channel (152 aa).

The next 3 helical transmembrane spans lie at 26 to 46 (VLDL…VGSA), 50 to 70 (ILTP…LFIT), and 92 to 112 (IGVF…IFWL).

The protein belongs to the MscL family. As to quaternary structure, homopentamer.

It is found in the cell inner membrane. Channel that opens in response to stretch forces in the membrane lipid bilayer. May participate in the regulation of osmotic pressure changes within the cell. This chain is Large-conductance mechanosensitive channel, found in Gluconobacter oxydans (strain 621H) (Gluconobacter suboxydans).